The following is a 994-amino-acid chain: Cation-chloride cotransporter 2 (994 aa).

The interval 1-28 (MERGGFGGAGRHDEEAPAMRPAPQQRYR) is disordered. The Cytoplasmic segment spans residues 1–139 (MERGGFGGAG…GHPKETETKL (139 aa)). A helical transmembrane segment spans residues 140–160 (DTMMGVFVPCLQNILGIIYYI). Residues 161–174 (RFTWIVGMGGVWQS) lie on the Extracellular side of the membrane. A helical membrane pass occupies residues 175-195 (LVLVAFCGSCTFLTTISLSAI). The Cytoplasmic portion of the chain corresponds to 196-221 (ATNGAMKGGGPYYLIGRALGPEVGVS). Residues 222–242 (IGLCFFLGNAVAGAMYVLGAV) traverse the membrane as a helical segment. The Extracellular portion of the chain corresponds to 243 to 287 (ETFLDAVPSAEFFQESVTVVTNTFVNGTAAGNATTISTPNLHDLQ). Residues asparagine 268 and asparagine 274 are each glycosylated (N-linked (GlcNAc...) asparagine). A helical membrane pass occupies residues 288-308 (VYGIIVTILLCFIVFGGVKII). Over 309–311 (NKV) the chain is Cytoplasmic. The chain crosses the membrane as a helical span at residues 312–332 (APAFLIPVLFSILCIYIGVFI). Topologically, residues 333-372 (APRPNASKWITGLSITTLKDNWSSDYQRTNNAGVPDPNGS) are extracellular. Asparagine 337, asparagine 353, and asparagine 370 each carry an N-linked (GlcNAc...) asparagine glycan. The helical transmembrane segment at 373–393 (IYWDFNALLGLYFPAVTGIMA) threads the bilayer. Topologically, residues 394-412 (GSNRSASLKDTQRSIPIGT) are cytoplasmic. The helical transmembrane segment at 413-433 (LHATISTTMMYLLSVFLFGAL) threads the bilayer. The Extracellular portion of the chain corresponds to 434 to 448 (STREGLLTDRLLCAA). The helical transmembrane segment at 449–469 (VAWPSPAVVYAGIILSTLGAA) threads the bilayer. Residues 470–505 (LQSLTGAPRLLAAIANDDILPVLNYFKAYEGSEPHV) lie on the Cytoplasmic side of the membrane. Residues 506–526 (ATLFTSFICISCVIIGNLDVI) form a helical membrane-spanning segment. At 527-529 (TPT) the chain is on the extracellular side. Residues 530–552 (ITMFFLLCYAGVNLSCFLLDLLD) form a helical membrane-spanning segment. Residues 553–558 (APSWRP) lie on the Cytoplasmic side of the membrane. The helical transmembrane segment at 559-579 (RWKLHHWSLSLIGALLCIVIM) threads the bilayer. At 580–585 (FMISWT) the chain is on the extracellular side. A helical membrane pass occupies residues 586–606 (FTVVSLALASLIYYYVSLKGK). Over 607–994 (AGDWGDGFKS…YRRDVVTLFT (388 aa)) the chain is Cytoplasmic.

The protein belongs to the SLC12A transporter family.

The protein resides in the membrane. Probable cation/chloride cotransporter. The sequence is that of Cation-chloride cotransporter 2 (CCC2) from Oryza sativa subsp. japonica (Rice).